The following is a 235-amino-acid chain: Small ribosomal subunit protein uS3 (235 aa).

The region spanning 39-107 (VRKFLNKELA…PAQINIAEVK (69 aa)) is the KH type-2 domain.

Belongs to the universal ribosomal protein uS3 family. As to quaternary structure, part of the 30S ribosomal subunit. Forms a tight complex with proteins S10 and S14.

In terms of biological role, binds the lower part of the 30S subunit head. Binds mRNA in the 70S ribosome, positioning it for translation. In Actinobacillus pleuropneumoniae serotype 5b (strain L20), this protein is Small ribosomal subunit protein uS3.